A 117-amino-acid chain; its full sequence is Prefoldin subunit beta (117 aa).

This sequence belongs to the prefoldin subunit beta family. In terms of assembly, heterohexamer of two alpha and four beta subunits.

Its subcellular location is the cytoplasm. Molecular chaperone capable of stabilizing a range of proteins. Seems to fulfill an ATP-independent, HSP70-like function in archaeal de novo protein folding. The protein is Prefoldin subunit beta (pfdB) of Pyrococcus horikoshii (strain ATCC 700860 / DSM 12428 / JCM 9974 / NBRC 100139 / OT-3).